Reading from the N-terminus, the 1029-residue chain is Ig-like and fibronectin type-III domain-containing protein 1 (1029 aa).

The N-terminal stretch at 1–22 is a signal peptide; sequence MCNVAEDPSSFSTITIATTCRA. Residues 23-918 lie on the Extracellular side of the membrane; the sequence is EWPKVSPCIA…RRSASKGSSS (896 aa). N-linked (GlcNAc...) asparagine glycans are attached at residues Asn-36, Asn-93, Asn-120, and Asn-165. Positions 90–181 constitute a Fibronectin type-III 1 domain; sequence APGNVTISEL…TAKLFSTLPT (92 aa). A WR1 domain is found at 185 to 227; the sequence is PLCTIGEPIYMNDGRVMICDAVNPCPNGFRCTGAGSDLSYCCP. Residues Asn-257, Asn-374, Asn-409, Asn-442, Asn-482, Asn-507, and Asn-552 are each glycosylated (N-linked (GlcNAc...) asparagine). Fibronectin type-III domains lie at 330–417 and 427–523; these read AVRN…TKPA and APEK…AQKD. One can recognise an Ig-like C2-type domain in the interval 619 to 710; that stretch reads ASVTMKKDKI…SRVEASSEVI (92 aa). Cys-640 and Cys-693 are oxidised to a cystine. Asn-753 carries an N-linked (GlcNAc...) asparagine glycan. The Fibronectin type-III 4 domain occupies 817–909; sequence APSEVSNVRI…SAIPKDSEPR (93 aa). Residues 919–939 form a helical membrane-spanning segment; the sequence is AFWIVVILVVFGVLIAGLAVL. Topologically, residues 940–1029 are cytoplasmic; that stretch reads SKRRELPYPI…NGMRYAKLET (90 aa). The interval 988-1021 is disordered; sequence SATTGTAAATQSEWQSANLEANSTTDNSHEYRNG. The span at 998–1013 shows a compositional bias: polar residues; it reads QSEWQSANLEANSTTD.

It localises to the cell membrane. The chain is Ig-like and fibronectin type-III domain-containing protein 1 from Caenorhabditis elegans.